A 160-amino-acid polypeptide reads, in one-letter code: 2-amino-4-hydroxy-6-hydroxymethyldihydropteridine pyrophosphokinase (160 aa).

It belongs to the HPPK family.

The enzyme catalyses 6-hydroxymethyl-7,8-dihydropterin + ATP = (7,8-dihydropterin-6-yl)methyl diphosphate + AMP + H(+). It functions in the pathway cofactor biosynthesis; tetrahydrofolate biosynthesis; 2-amino-4-hydroxy-6-hydroxymethyl-7,8-dihydropteridine diphosphate from 7,8-dihydroneopterin triphosphate: step 4/4. Functionally, catalyzes the transfer of pyrophosphate from adenosine triphosphate (ATP) to 6-hydroxymethyl-7,8-dihydropterin, an enzymatic step in folate biosynthesis pathway. This is 2-amino-4-hydroxy-6-hydroxymethyldihydropteridine pyrophosphokinase (folK) from Aquifex aeolicus (strain VF5).